The sequence spans 768 residues: U-box domain-containing protein 45 (768 aa).

Residues 278 to 352 (VPPEELRCPI…SSWCEQNGVQ (75 aa)) enclose the U-box domain. ARM repeat units lie at residues 454–497 (EEAR…NLAV), 500–540 (NRNK…CLEE), 542–579 (KPVIGSSLAVPFMVNLLWTETEVQCKVDALHSLFHLST), 581–620 (PPNIPCLLSADLVNALQSLTISDEQRWTEKSLAVLLNLVL), and 623–662 (AGKDEMVSAPSLVSNLCTILDTGEPNEQEQAVSLLLILCN).

In terms of assembly, binds to SD129.

The enzyme catalyses S-ubiquitinyl-[E2 ubiquitin-conjugating enzyme]-L-cysteine + [acceptor protein]-L-lysine = [E2 ubiquitin-conjugating enzyme]-L-cysteine + N(6)-ubiquitinyl-[acceptor protein]-L-lysine.. It functions in the pathway protein modification; protein ubiquitination. Functionally, functions as an E3 ubiquitin ligase. The polypeptide is U-box domain-containing protein 45 (PUB45) (Arabidopsis thaliana (Mouse-ear cress)).